The chain runs to 314 residues: Olfactory receptor 5B17 (314 aa).

Over 1-23 (MENNTEVSEFILLGLTNAPELQV) the chain is Extracellular. Residue N3 is glycosylated (N-linked (GlcNAc...) asparagine). Residues 24–44 (PLFIMFTLIYLITLTGNLGMI) form a helical membrane-spanning segment. Over 45–52 (ILILLDSH) the chain is Cytoplasmic. Residues 53-73 (LHTPMYFFLSNLSLAGIGYSS) traverse the membrane as a helical segment. Over 74 to 97 (AVTPKVLTGLLIEDKAISYSACAA) the chain is Extracellular. C95 and C187 are disulfide-bonded. The helical transmembrane segment at 98 to 118 (QMFFCAVFATVENYLLSSMAY) threads the bilayer. The Cytoplasmic portion of the chain corresponds to 119-137 (DRYAAVCNPLHYTTTMTTR). Residues 138 to 158 (VCACLAIGCYVIGFLNASIQI) traverse the membrane as a helical segment. At 159–194 (GDTFRLSFCMSNVIHHFFCDKPAVITLTCSEKHISE) the chain is on the extracellular side. A helical transmembrane segment spans residues 195–215 (LILVLISSFNVFFALLVTLIS). The Cytoplasmic portion of the chain corresponds to 216 to 235 (YLFILITILKRHTGKGYQKP). The chain crosses the membrane as a helical span at residues 236–256 (LSTCGSHLIAIFLFYITVIIM). The Extracellular portion of the chain corresponds to 257 to 269 (YIRPSSSHSMDTD). Residues 270–290 (KIASVFYTMIIPMLSPIVYTL) traverse the membrane as a helical segment. Residues 291–314 (RNKDVKNAFMKVVEKAKYSLDSVF) are Cytoplasmic-facing.

This sequence belongs to the G-protein coupled receptor 1 family.

Its subcellular location is the cell membrane. Functionally, odorant receptor. The polypeptide is Olfactory receptor 5B17 (OR5B17) (Homo sapiens (Human)).